The primary structure comprises 291 residues: Phosphatidylglycerol--prolipoprotein diacylglyceryl transferase (291 aa).

7 consecutive transmembrane segments (helical) span residues 21-41 (VALH…MWLA), 60-80 (LLYA…VLFY), 96-116 (WDGG…MIIF), 130-150 (FIAP…FING), 198-218 (SQLY…NLFI), 225-245 (GAVS…VEFF), and 260-280 (ISMG…MMVW). An a 1,2-diacyl-sn-glycero-3-phospho-(1'-sn-glycerol)-binding site is contributed by Arg-143.

The protein belongs to the Lgt family.

It localises to the cell inner membrane. The catalysed reaction is L-cysteinyl-[prolipoprotein] + a 1,2-diacyl-sn-glycero-3-phospho-(1'-sn-glycerol) = an S-1,2-diacyl-sn-glyceryl-L-cysteinyl-[prolipoprotein] + sn-glycerol 1-phosphate + H(+). It participates in protein modification; lipoprotein biosynthesis (diacylglyceryl transfer). Functionally, catalyzes the transfer of the diacylglyceryl group from phosphatidylglycerol to the sulfhydryl group of the N-terminal cysteine of a prolipoprotein, the first step in the formation of mature lipoproteins. The sequence is that of Phosphatidylglycerol--prolipoprotein diacylglyceryl transferase from Salmonella newport (strain SL254).